We begin with the raw amino-acid sequence, 332 residues long: uncharacterized protein (332 aa).

The first 26 residues, M1–G26, serve as a signal peptide directing secretion.

It localises to the endoplasmic reticulum. This is an uncharacterized protein from Schizosaccharomyces pombe (strain 972 / ATCC 24843) (Fission yeast).